The primary structure comprises 472 residues: Ribulose bisphosphate carboxylase large chain (472 aa).

2 residues coordinate substrate: Asn120 and Thr170. Lys172 serves as the catalytic Proton acceptor. Position 174 (Lys174) interacts with substrate. Mg(2+)-binding residues include Lys198, Asp200, and Glu201. At Lys198 the chain carries N6-carboxylysine. His291 serves as the catalytic Proton acceptor. Arg292, His324, and Ser376 together coordinate substrate.

It belongs to the RuBisCO large chain family. Type I subfamily. Heterohexadecamer of 8 large chains and 8 small chains. The cofactor is Mg(2+).

The protein resides in the carboxysome. It carries out the reaction 2 (2R)-3-phosphoglycerate + 2 H(+) = D-ribulose 1,5-bisphosphate + CO2 + H2O. The catalysed reaction is D-ribulose 1,5-bisphosphate + O2 = 2-phosphoglycolate + (2R)-3-phosphoglycerate + 2 H(+). Its function is as follows. RuBisCO catalyzes two reactions: the carboxylation of D-ribulose 1,5-bisphosphate, the primary event in carbon dioxide fixation, as well as the oxidative fragmentation of the pentose substrate in the photorespiration process. Both reactions occur simultaneously and in competition at the same active site. The chain is Ribulose bisphosphate carboxylase large chain from Gloeothece citriformis (strain PCC 7424) (Cyanothece sp. (strain PCC 7424)).